The sequence spans 280 residues: Cell envelope integrity protein EipB (280 aa).

Positions 1–24 (MRFVRIAAAASGATVFMWAGFAGA) are cleaved as a signal peptide. Cysteines 69 and 278 form a disulfide.

Monomer.

It localises to the periplasm. Functions in the periplasm to maintain cell envelope integrity. The protein is Cell envelope integrity protein EipB of Brucella abortus (strain 2308).